A 218-amino-acid chain; its full sequence is Octanoyltransferase (218 aa).

A BPL/LPL catalytic domain is found at G32–D218. Substrate contacts are provided by residues R71–H78, A151–G153, and G164–S166. The active-site Acyl-thioester intermediate is C182.

It belongs to the LipB family.

It is found in the cytoplasm. The enzyme catalyses octanoyl-[ACP] + L-lysyl-[protein] = N(6)-octanoyl-L-lysyl-[protein] + holo-[ACP] + H(+). It functions in the pathway protein modification; protein lipoylation via endogenous pathway; protein N(6)-(lipoyl)lysine from octanoyl-[acyl-carrier-protein]: step 1/2. Its function is as follows. Catalyzes the transfer of endogenously produced octanoic acid from octanoyl-acyl-carrier-protein onto the lipoyl domains of lipoate-dependent enzymes. Lipoyl-ACP can also act as a substrate although octanoyl-ACP is likely to be the physiological substrate. The protein is Octanoyltransferase of Cereibacter sphaeroides (strain ATCC 17029 / ATH 2.4.9) (Rhodobacter sphaeroides).